A 171-amino-acid polypeptide reads, in one-letter code: Co-chaperone protein HscB (171 aa).

Positions 2–74 (DYFTLFGLPA…LTRAEYLLSL (73 aa)) constitute a J domain.

This sequence belongs to the HscB family. As to quaternary structure, interacts with HscA and stimulates its ATPase activity. Interacts with IscU.

Functionally, co-chaperone involved in the maturation of iron-sulfur cluster-containing proteins. Seems to help targeting proteins to be folded toward HscA. The chain is Co-chaperone protein HscB from Klebsiella pneumoniae subsp. pneumoniae (strain ATCC 700721 / MGH 78578).